We begin with the raw amino-acid sequence, 158 residues long: Mediator of RNA polymerase II transcription subunit 31 (158 aa).

A disordered region spans residues 130–158; it reads EQSAAEAGEQNTEQNKGDRGNVENQHGKT.

The protein belongs to the Mediator complex subunit 31 family. As to quaternary structure, component of the Mediator complex.

Its subcellular location is the nucleus. In terms of biological role, component of the Mediator complex, a coactivator involved in the regulated transcription of nearly all RNA polymerase II-dependent genes. Mediator functions as a bridge to convey information from gene-specific regulatory proteins to the basal RNA polymerase II transcription machinery. Mediator is recruited to promoters by direct interactions with regulatory proteins and serves as a scaffold for the assembly of a functional preinitiation complex with RNA polymerase II and the general transcription factors. The sequence is that of Mediator of RNA polymerase II transcription subunit 31 (soh1) from Emericella nidulans (strain FGSC A4 / ATCC 38163 / CBS 112.46 / NRRL 194 / M139) (Aspergillus nidulans).